A 1460-amino-acid chain; its full sequence is DNA-binding protein RFX7 (1460 aa).

The tract at residues 1-34 (MAEEQQQPPPQQPDAHQQLPPSAPNSGVALPALV) is disordered. The segment at residues 108–183 (AFSWIRNTLE…YCYSGLRKKA (76 aa)) is a DNA-binding region (RFX-type winged-helix). Positions 188 to 193 (PTLPNL) match the PxLPxI/L motif; mediates interaction with ANKRA2 and RFXANK motif. The tract at residues 308-352 (QRKIQKKQQEQKLQSPLPGESAAKKSESATSNGVTNLPNGNPSIL) is disordered. Phosphoserine is present on Ser-322. Positions 337-352 (TSNGVTNLPNGNPSIL) are enriched in polar residues. Residue Ser-379 is modified to Phosphoserine. Over residues 404-416 (SVKQAPKTPQNVP) the composition is skewed to polar residues. The interval 404-428 (SVKQAPKTPQNVPASPGGDRSARHR) is disordered. Residues Ser-418 and Ser-455 each carry the phosphoserine modification. The segment covering 481–513 (TPSNSNTPLKHSASVSSATGTTEESRSVPQIKN) has biased composition (polar residues). 3 disordered regions span residues 481–585 (TPSN…PSNE), 632–715 (TFTS…AQIP), and 917–1015 (QSVT…SVPP). Positions 515–535 (SVVSLQSPGSRSSSAGGTSAV) are enriched in low complexity. Basic and acidic residues predominate over residues 537-549 (VKVEPETSSDEHP). Polar residues-rich tracts occupy residues 563–583 (QTPS…QKPS) and 632–644 (TFTS…NGDS). A Phosphothreonine modification is found at Thr-564. Ser-662 is subject to Phosphoserine. An N6-acetyllysine modification is found at Lys-704. Composition is skewed to polar residues over residues 705 to 715 (TEGSTAGAQIP) and 917 to 933 (QSVT…SSTH). Residues 947-963 (TPTPTPTPTPTPTPTPT) are compositionally biased toward pro residues. The segment covering 971–1009 (GSQSLSRESPCSRLAQTTPVDSALGSSRHTPIGTPHSNC) has biased composition (polar residues). Thr-988 is subject to Phosphothreonine. Phosphoserine occurs at positions 1178 and 1329.

Belongs to the RFX family. As to quaternary structure, interacts (via PxLPxI/L motif) with RFXANK (via ankyrin repeats). Interacts (via PxLPxI/L motif) with ANKRA2 (via ankyrin repeats). As to expression, widely expressed in many different tissue types including thymus and placenta, with high expression in brain. Expressed in both inhibitory and excitatory neurons in cortex.

It is found in the nucleus. Transcription factor. Acts as a transcriptional activator by binding to promoter regions of target genes, such as PDCD4, PIK3IP1, MXD4, PNRC1, and RFX5. Plays a role in natural killer (NK) cell maintenance and immunity. May play a role in the process of ciliogenesis in the neural tube and neural tube closure. The polypeptide is DNA-binding protein RFX7 (Homo sapiens (Human)).